The primary structure comprises 484 residues: MGVISVQLVVTMVMASVIQKIIPHYSFARWLLCSGSLRWYQHPTEDELRTLAGKQQKGGKSKKDRKYNGHLENKPMTIPKDIDLQLETKCIAEVDTLALHYFPEFQWLVDFTVAATVVYLITELYFCVAEPSGEMNISVVWSLLVLAFVMKILFSLTAHYFRLEEGGERSLCITFAFFFFVKAMAILIVTENYLEFGLETGFANFSESAVQFLENQGLESQGPISKLTFKLILALLCALIGAFLTFPGLRLAQMHLDALTLNNCKVTQTLLHINFLAPLIMVLLWVKPITKDYITNPTFGKDNVPLMSEKTYDTLRLWVILLLCVLRLAMMRHHLQAYLNLAQKGVLQMKKEAGRISTVDLQKMVARVFYYLCVIALQYIAPLVMLLHTTLLLKTLGGHSWVIYSDESLPCLSNEDSSPAEVGQSQMEASQTVAQLSVALGGLRTVFSPLLFRGLLSFFTWWIAACLFSTSLFGLFYHQYLMAA.

The helical transmembrane segment at 108–128 threads the bilayer; that stretch reads LVDFTVAATVVYLITELYFCV. N136 is a glycosylation site (N-linked (GlcNAc...) asparagine). Helical transmembrane passes span 137-157 and 170-190; these read ISVV…FSLT and SLCI…LIVT. N204 carries an N-linked (GlcNAc...) asparagine glycan. 4 helical membrane-spanning segments follow: residues 229-249, 266-286, 368-388, and 456-476; these read FKLI…FPGL, VTQT…LLWV, VFYY…MLLH, and LSFF…FGLF.

The protein belongs to the TMEM161 family.

Its subcellular location is the cell membrane. Functionally, essential for maintaining normal cardiac rhythm in the developing heart and for neonatal survival. Inhibits potassium and calcium currents in the cardiomyocytes, this assists in timely action potential repolarization and thereby maintains normal cardiac rhythm. This chain is Transmembrane protein 161B (tmem161b), found in Danio rerio (Zebrafish).